The sequence spans 622 residues: Chaperone protein HscA homolog (622 aa).

This sequence belongs to the heat shock protein 70 family.

In terms of biological role, chaperone involved in the maturation of iron-sulfur cluster-containing proteins. Has a low intrinsic ATPase activity which is markedly stimulated by HscB. This Burkholderia orbicola (strain MC0-3) protein is Chaperone protein HscA homolog.